A 194-amino-acid chain; its full sequence is Type II restriction enzyme OkrAI (194 aa).

Mg(2+) is bound by residues glutamate 71, aspartate 86, and tryptophan 100. Catalysis depends on glutamate 101, which acts as the Proton acceptor.

Homodimer. Requires Mg(2+) as cofactor.

The catalysed reaction is Endonucleolytic cleavage of DNA to give specific double-stranded fragments with terminal 5'-phosphates.. In terms of biological role, a P subtype restriction enzyme that recognizes the double-stranded sequence 5'-GGATCC-3' and cleaves after G-1. The protein is Type II restriction enzyme OkrAI of Oceanobacter kriegii (Oceanospirillum kriegii).